The primary structure comprises 521 residues: Type-1 glutamine synthetase 2 (521 aa).

Positions Asn-76–Gly-176 constitute a GS beta-grasp domain. A GS catalytic domain is found at Pro-183–Ile-521.

The protein belongs to the glutamine synthetase family.

It catalyses the reaction L-glutamate + NH4(+) + ATP = L-glutamine + ADP + phosphate + H(+). The sequence is that of Type-1 glutamine synthetase 2 (glnA2) from Dictyostelium discoideum (Social amoeba).